Reading from the N-terminus, the 236-residue chain is Small ribosomal subunit protein uS3 (236 aa).

The region spanning 39-107 is the KH type-2 domain; it reads VRQFLTKELK…PAQINISEVR (69 aa).

Belongs to the universal ribosomal protein uS3 family. As to quaternary structure, part of the 30S ribosomal subunit. Forms a tight complex with proteins S10 and S14.

Binds the lower part of the 30S subunit head. Binds mRNA in the 70S ribosome, positioning it for translation. The protein is Small ribosomal subunit protein uS3 of Aeromonas salmonicida (strain A449).